Reading from the N-terminus, the 2081-residue chain is Non-reducing polyketide synthase terA (2081 aa).

Positions 85–190 (TLTLAFRIGV…ISLDIFAPFH (106 aa)) are N-terminal acylcarrier protein transacylase (SAT) domain (SAT). Positions 316–749 (AQKIAIVGMA…GGNTGLLLED (434 aa)) constitute a Ketosynthase family 3 (KS3) domain. Active-site for beta-ketoacyl synthase activity residues include C488, H623, and H667. The interval 849 to 1147 (LFTGQGSHYT…LTLPSLRKQE (299 aa)) is malonyl-CoA:ACP transacylase (MAT) domain. The interval 1230 to 1364 (QKVIKEDFGQ…CHVEYGDIKT (135 aa)) is N-terminal hotdog fold. Residues 1230–1539 (QKVIKEDFGQ…FKAIPRAVIN (310 aa)) enclose the PKS/mFAS DH domain. Residues 1259-1536 (VTGHLVNGSA…GVKFKAIPRA (278 aa)) are product template (PT) domain. Residue H1262 is the Proton acceptor; for dehydratase activity of the active site. The tract at residues 1392–1539 (YQKLDRKAAY…FKAIPRAVIN (148 aa)) is C-terminal hotdog fold. D1452 serves as the catalytic Proton donor; for dehydratase activity. The disordered stretch occupies residues 1549–1578 (KALEKSAPRQNPKATATKTTQKPQAPVPVP). Positions 1558 to 1572 (QNPKATATKTTQKPQ) are enriched in low complexity. The 79-residue stretch at 1580-1658 (KQNKAIIDDF…QVKELILKLA (79 aa)) folds into the Carrier 1 domain. At S1617 the chain carries O-(pantetheine 4'-phosphoryl)serine. A disordered region spans residues 1659–1700 (GSSSDENTTDTPDEEEDPATADADNTEMIRENPLESVSPNVS). Residues 1665–1677 (NTTDTPDEEEDPA) are compositionally biased toward acidic residues. Positions 1699–1776 (VSSSEAMDGF…QARLAIASLM (78 aa)) constitute a Carrier 2 domain. The residue at position 1736 (S1736) is an O-(pantetheine 4'-phosphoryl)serine. The tract at residues 1783 to 1809 (GATTPYSGSDDAKSSTSSLTAGSVLTP) is disordered. Residues 1840 to 2070 (TLFLLPDGSG…TMMREPKVNQ (231 aa)) are thioesterase (TE) domain.

The catalysed reaction is 3 malonyl-CoA + acetyl-CoA + 2 H(+) = orsellinate + 3 CO2 + 4 CoA. It functions in the pathway secondary metabolite biosynthesis. Its function is as follows. Non-reducing polyketide synthase; part of the gene cluster that mediates the biosynthesis of terrein, a fungal metabolite with ecological, antimicrobial, antiproliferative, and antioxidative activities. The first step in the pathway is performed by the polyketide synthase terA that produces 4-hydroxy-6-methylpyranon (4-HMP), orsellinic acid (OA), and 2,3-dehydro-6-hydroxymellein (2,3-dehydro-6-HM) by condensing acetyl-CoA with two, three, or four malonyl-CoA units, respectively. 4-HMP and OA are not pathway intermediates, but are rather shunt or side products. 2,3-dehydro-6-HM is further converted to 6-hydroxymellein (6-HM) by the 6-hydroxymellein synthase terB. The monooxygenases terC and terD, the multicopper oxidase terE and the Kelch-like protein terF are then involved in the transformation of 6-HM to terrein. Even if they are co-regulated with the other terrein cluster genes, terH and terI seem to be dispensable for terrein production; whereas one or both of the 2 transporters terG and terJ are probably required for efficient secretion of metabolites. This is Non-reducing polyketide synthase terA from Aspergillus terreus (strain NIH 2624 / FGSC A1156).